The primary structure comprises 761 residues: Complement factor B (761 aa).

The signal sequence occupies residues Met-1–Met-25. Sushi domains are found at residues Ser-35–Ala-100, Ile-101–Asp-160, and Thr-163–Asp-220. Intrachain disulfides connect Cys-37–Cys-76, Cys-62–Cys-98, Cys-103–Cys-145, Cys-131–Cys-158, Cys-165–Cys-205, and Cys-191–Cys-218. N-linked (GlcNAc...) asparagine glycans are attached at residues Asn-122 and Asn-142. A VWFA domain is found at Asn-270–Leu-469. Mg(2+) is bound by residues Ser-278 and Ser-280. Residue Asn-285 is glycosylated (N-linked (GlcNAc...) asparagine). Thr-353 contacts Mg(2+). An N-linked (GlcNAc...) asparagine glycan is attached at Asn-378. A Peptidase S1 domain is found at Leu-477–Gln-754. Cystine bridges form between Cys-478/Cys-596, Cys-511/Cys-527, Cys-599/Cys-615, Cys-656/Cys-682, and Cys-695/Cys-725. Catalysis depends on charge relay system residues His-526 and Asp-576. The Charge relay system role is filled by Ser-699.

Belongs to the peptidase S1 family. In terms of assembly, monomer. Interacts with complement C3b; this interaction is dependent on the presence of Mg(2+). Catalytic component of the C3 convertase of the alternative complement pathway, also named C3bBb, composed of complement factor B Bb and complement C3b. Catalytic component of the C5 convertase of the alternative complement pathway, also named C3bBb3b, composed of complement factor B Bb and additional molecules of complement C3b. Interacts to CFP; this interaction contributes to the stabilization of the active C3-convertase enzyme complex. Requires Mg(2+) as cofactor. Mn(2+) is required as a cofactor. Cleaved by CFD following activation of the alternative complement system, generating Ba and Bb chains. Cleavage and activation takes place when CFB is already associated with complement C3b.

It localises to the secreted. The protein localises to the cell surface. It carries out the reaction Cleavage of Arg-|-Ser bond in complement component C3 alpha-chain to yield C3a and C3b, and Arg-|-Xaa bond in complement component C5 alpha-chain to yield C5a and C5b.. Functionally, precursor of the catalytic component of the C3 and C5 convertase complexes of the alternative pathway of the complement system, a cascade of proteins that leads to phagocytosis and breakdown of pathogens and signaling that strengthens the adaptive immune system. The alternative complement pathway acts as an amplification loop that enhances other complement pathways (classical, lectin and GZMK) by promoting formation of additional C3 and C5 convertases. CFB is cleaved and activated by CFD to generate Ba and Bb chains; Bb chain constituting the catalytic component of the C3 and C5 convertases. Its function is as follows. Serine protease component of the complement C3 and C5 convertase complexes of the alternative complement pathway. Following cleavage and activation by factor D (CFD), forms the C3 convertase together with complement C3b. As part of the C3 convertase, cleaves and activates C3 into C3a anaphylatoxin and C3b opsonin, the next components of the complement pathways. When an additional complement C3b molecule binds to the C3 convertase, forms the C5 convertase, which cleaves and activates C5 into C5a anaphylatoxin and C5b component of the membrane attack complex. In terms of biological role, involved in proliferation and differentiation of preactivated B-lymphocytes, rapid spreading of peripheral blood monocytes, stimulation of lymphocyte blastogenesis and lysis of erythrocytes. The polypeptide is Complement factor B (CFB) (Bos taurus (Bovine)).